Here is a 585-residue protein sequence, read N- to C-terminus: Poly(A) RNA polymerase, mitochondrial (585 aa).

The transit peptide at 1–37 directs the protein to the mitochondrion; that stretch reads MAARGVGLLTRLPVCSQRRNRIPRSISRLLSCPGTIA. The residue at position 90 (lysine 90) is an N6-acetyllysine. Residues 107-109 and 244-245 contribute to the ATP site; these read YES and GC. Positions 246 and 248 each coordinate Mg(2+). One can recognise a PAP-associated domain in the interval 441 to 486; that stretch reads ELLIKEFFEYFGNFAFNKNSINIRQGREQNKPDSSPLYIQNPFETS. The tract at residues 537 to 585 is disordered; the sequence is PGSGHTSLSRKKKKKPMSEKVKGLLASIKSNSPDSSTDTSGKRTISTQA. Residues 564–585 show a composition bias toward polar residues; it reads IKSNSPDSSTDTSGKRTISTQA.

It belongs to the DNA polymerase type-B-like family. As to quaternary structure, homodimer. Requires Mg(2+) as cofactor. Mn(2+) serves as cofactor.

The protein localises to the cytoplasm. Its subcellular location is the mitochondrion. It catalyses the reaction RNA(n) + ATP = RNA(n)-3'-adenine ribonucleotide + diphosphate. Functionally, polymerase that creates the 3' poly(A) tail of mitochondrial transcripts. Can use all four nucleotides, but has higher activity with ATP and UTP (in vitro). Plays a role in replication-dependent histone mRNA degradation. May be involved in the terminal uridylation of mature histone mRNAs before their degradation is initiated. Might be responsible for the creation of some UAA stop codons which are not encoded in mtDNA. In Mus musculus (Mouse), this protein is Poly(A) RNA polymerase, mitochondrial (Mtpap).